A 270-amino-acid chain; its full sequence is Glucosamine-6-phosphate deaminase (270 aa).

Aspartate 72 (proton acceptor; for enolization step) is an active-site residue. Catalysis depends on aspartate 141, which acts as the For ring-opening step. Catalysis depends on histidine 143, which acts as the Proton acceptor; for ring-opening step. Glutamate 148 serves as the catalytic For ring-opening step.

It belongs to the glucosamine/galactosamine-6-phosphate isomerase family. NagB subfamily.

The catalysed reaction is alpha-D-glucosamine 6-phosphate + H2O = beta-D-fructose 6-phosphate + NH4(+). It participates in amino-sugar metabolism; N-acetylneuraminate degradation; D-fructose 6-phosphate from N-acetylneuraminate: step 5/5. Its activity is regulated as follows. Allosterically activated by N-acetylglucosamine 6-phosphate (GlcNAc6P). In terms of biological role, catalyzes the reversible isomerization-deamination of glucosamine 6-phosphate (GlcN6P) to form fructose 6-phosphate (Fru6P) and ammonium ion. The protein is Glucosamine-6-phosphate deaminase of Parabacteroides distasonis (strain ATCC 8503 / DSM 20701 / CIP 104284 / JCM 5825 / NCTC 11152).